The primary structure comprises 671 residues: UvrABC system protein B (671 aa).

The Helicase ATP-binding domain occupies 26–414 (EGLENGLAHQ…GGDIIEQVVR (389 aa)). ATP is bound at residue 39 to 46 (GVTGSGKT). Positions 92 to 115 (YYDYYQPEAYVPSSDTFIEKDASV) match the Beta-hairpin motif. Residues 431-593 (QVDDLLSEIR…IIPQGLNKKI (163 aa)) enclose the Helicase C-terminal domain. The 36-residue stretch at 631–666 (DQKIRELEAKMYTYAQNLEFEQAAELRDQVHQLRQQ) folds into the UVR domain.

This sequence belongs to the UvrB family. In terms of assembly, forms a heterotetramer with UvrA during the search for lesions. Interacts with UvrC in an incision complex.

It is found in the cytoplasm. Functionally, the UvrABC repair system catalyzes the recognition and processing of DNA lesions. A damage recognition complex composed of 2 UvrA and 2 UvrB subunits scans DNA for abnormalities. Upon binding of the UvrA(2)B(2) complex to a putative damaged site, the DNA wraps around one UvrB monomer. DNA wrap is dependent on ATP binding by UvrB and probably causes local melting of the DNA helix, facilitating insertion of UvrB beta-hairpin between the DNA strands. Then UvrB probes one DNA strand for the presence of a lesion. If a lesion is found the UvrA subunits dissociate and the UvrB-DNA preincision complex is formed. This complex is subsequently bound by UvrC and the second UvrB is released. If no lesion is found, the DNA wraps around the other UvrB subunit that will check the other stand for damage. The polypeptide is UvrABC system protein B (Yersinia pestis).